The sequence spans 130 residues: Holo-[acyl-carrier-protein] synthase (130 aa).

Asp-8 and Glu-62 together coordinate Mg(2+).

It belongs to the P-Pant transferase superfamily. AcpS family. It depends on Mg(2+) as a cofactor.

It is found in the cytoplasm. It carries out the reaction apo-[ACP] + CoA = holo-[ACP] + adenosine 3',5'-bisphosphate + H(+). Transfers the 4'-phosphopantetheine moiety from coenzyme A to a Ser of acyl-carrier-protein. The polypeptide is Holo-[acyl-carrier-protein] synthase (Acidovorax ebreus (strain TPSY) (Diaphorobacter sp. (strain TPSY))).